The chain runs to 714 residues: Polyribonucleotide nucleotidyltransferase (714 aa).

Mg(2+) is bound by residues aspartate 488 and aspartate 494. The KH domain maps to 555 to 614 (PRIEVMNIPTDKIRDVIGSGGKVIREIVEKTGAKINIEDDGTVKIASSNGKEIEAAKKWI). The region spanning 624 to 692 (GEIYEGTVVK…ERGKVRLSMK (69 aa)) is the S1 motif domain.

The protein belongs to the polyribonucleotide nucleotidyltransferase family. It depends on Mg(2+) as a cofactor.

The protein resides in the cytoplasm. It catalyses the reaction RNA(n+1) + phosphate = RNA(n) + a ribonucleoside 5'-diphosphate. Its function is as follows. Involved in mRNA degradation. Catalyzes the phosphorolysis of single-stranded polyribonucleotides processively in the 3'- to 5'-direction. The chain is Polyribonucleotide nucleotidyltransferase from Brucella abortus biovar 1 (strain 9-941).